A 1047-amino-acid chain; its full sequence is Probable phospholipid-transporting ATPase IIA (1047 aa).

T2 carries the post-translational modification N-acetylthreonine. The Cytoplasmic segment spans residues 2–69 (TDNIPLQPVR…NQKYNFFTFL (68 aa)). The helical transmembrane segment at 70–91 (PGVLFNQFKYFFNLYFLLLACS) threads the bilayer. Residues 92 to 96 (QFVPE) are Extracellular-facing. A helical membrane pass occupies residues 97–119 (MRLGALYTYWVPLGFVLAVTVIR). Residues 120-303 (EAVEEIRCYV…GLFDLEVNCL (184 aa)) are Cytoplasmic-facing. A helical transmembrane segment spans residues 304–325 (TKILFGALVVVSLVMVALQHFA). Residues 326–332 (GRWYLQI) are Extracellular-facing. The chain crosses the membrane as a helical span at residues 333-354 (IRFLLLFSNIIPISLRVNLDMG). The Cytoplasmic segment spans residues 355–841 (KIVYSWVIRR…GRNSYKRSAA (487 aa)). D391 (4-aspartylphosphate intermediate) is an active-site residue. Positions 391, 392, 393, 502, 544, 549, 568, 597, 677, 678, 679, 759, and 765 each coordinate ATP. Residue D391 coordinates Mg(2+). T393 contributes to the Mg(2+) binding site. D785 provides a ligand contact to Mg(2+). The ATP site is built by N788 and D789. Residue D789 coordinates Mg(2+). Residues 842-862 (LSQFVIHRSLCISTMQAVFSS) traverse the membrane as a helical segment. At 863 to 874 (VFYFASVPLYQG) the chain is on the extracellular side. The helical transmembrane segment at 875–893 (FLIIGYSTIYTMFPVFSLV) threads the bilayer. Topologically, residues 894 to 923 (LDKDVKSEVAMLYPELYKDLLKGRPLSYKT) are cytoplasmic. The chain crosses the membrane as a helical span at residues 924–942 (FLIWVLISIYQGSTIMYGA). Residues 943-949 (LLLFESE) lie on the Extracellular side of the membrane. Residues 950–972 (FVHIVAISFTSLILTELLMVALT) form a helical membrane-spanning segment. The Cytoplasmic segment spans residues 973-978 (IQTWHW). The chain crosses the membrane as a helical span at residues 979–999 (LMTVAELLSLACYIASLVFLH). At 1000–1006 (EFIDVYF) the chain is on the extracellular side. The helical transmembrane segment at 1007-1030 (IATLSFLWKVSVITLVSCLPLYVL) threads the bilayer. The Cytoplasmic segment spans residues 1031 to 1047 (KYLRRRFSPPSYSKLTS).

This sequence belongs to the cation transport ATPase (P-type) (TC 3.A.3) family. Type IV subfamily. In terms of assembly, heterotrimer with MON2 and DOP1B; this complex regulates SNX3-retromer mediated endosomal sorting of WLS. Interacts with RAB5A and RAB11A. It depends on Mg(2+) as a cofactor.

It localises to the early endosome membrane. The protein resides in the recycling endosome membrane. The protein localises to the late endosome membrane. It is found in the golgi apparatus. Its subcellular location is the trans-Golgi network membrane. It localises to the cell membrane. It catalyses the reaction ATP + H2O + phospholipidSide 1 = ADP + phosphate + phospholipidSide 2.. Its function is as follows. Plays a role in regulating membrane trafficking of cargo proteins, namely endosome to plasma membrane recycling, probably acting through RAB5 and RAB11 activation. Also involved in endosome to trans-Golgi network retrograde transport. In complex with MON2 and DOP1B, regulates SNX3 retromer-mediated endosomal sorting of WLS, a transporter of Wnt morphogens in developing tissues. Participates in the formation of endosomal carriers that direct WLS trafficking back to Golgi, away from lysosomal degradation. Appears to be implicated in intercellular communication by negatively regulating the release of exosomes. The flippase activity towards membrane lipids and its role in membrane asymmetry remains to be proved. Required for the maintenance of neurite morphology and synaptic transmission. This is Probable phospholipid-transporting ATPase IIA from Homo sapiens (Human).